Reading from the N-terminus, the 121-residue chain is MTDKPAVIRKRADFLAANRGLRVARPGFVLLAHPNQGQGQRYGITVTKKIGNAVVRNRMKRRFRELLWELLPQQGLADHDHILIGREGGIERDFGKLREELMLALRRAREGKGDPRRRRRR.

This sequence belongs to the RnpA family. Consists of a catalytic RNA component (M1 or rnpB) and a protein subunit.

The enzyme catalyses Endonucleolytic cleavage of RNA, removing 5'-extranucleotides from tRNA precursor.. Its function is as follows. RNaseP catalyzes the removal of the 5'-leader sequence from pre-tRNA to produce the mature 5'-terminus. It can also cleave other RNA substrates such as 4.5S RNA. The protein component plays an auxiliary but essential role in vivo by binding to the 5'-leader sequence and broadening the substrate specificity of the ribozyme. In Erythrobacter litoralis (strain HTCC2594), this protein is Ribonuclease P protein component.